The primary structure comprises 315 residues: Small ribosomal subunit biogenesis GTPase RsgA (315 aa).

The CP-type G domain maps to 79 to 243 (LSKESHILGA…LIDTPGIKGF (165 aa)). Residues 128–131 (NKID) and 182–190 (GHSGVGKSS) each bind GTP. 4 residues coordinate Zn(2+): Cys267, Cys272, His274, and Cys280.

It belongs to the TRAFAC class YlqF/YawG GTPase family. RsgA subfamily. In terms of assembly, monomer. Associates with 30S ribosomal subunit, binds 16S rRNA. Zn(2+) is required as a cofactor.

Its subcellular location is the cytoplasm. One of several proteins that assist in the late maturation steps of the functional core of the 30S ribosomal subunit. Helps release RbfA from mature subunits. May play a role in the assembly of ribosomal proteins into the subunit. Circularly permuted GTPase that catalyzes slow GTP hydrolysis, GTPase activity is stimulated by the 30S ribosomal subunit. The chain is Small ribosomal subunit biogenesis GTPase RsgA from Porphyromonas gingivalis (strain ATCC BAA-308 / W83).